A 212-amino-acid polypeptide reads, in one-letter code: uncharacterized protein (212 aa).

The interval 1 to 88 is disordered; the sequence is MAEEQKIALE…PAPAKPASAS (88 aa). Phosphoserine is present on Ser-13. The span at 23–41 shows a compositional bias: pro residues; sequence ADTPAPAPAEIPAPAPAPT. A compositionally biased stretch (basic and acidic residues) spans 45-54; sequence VTKDVAEEKI.

The protein belongs to the remorin family.

The protein localises to the cell membrane. This is an uncharacterized protein from Arabidopsis thaliana (Mouse-ear cress).